The chain runs to 272 residues: Putative pyruvate, phosphate dikinase regulatory protein (272 aa).

Residue 147–154 (GLSRTSKT) coordinates ADP.

Belongs to the pyruvate, phosphate/water dikinase regulatory protein family. PDRP subfamily.

The catalysed reaction is N(tele)-phospho-L-histidyl/L-threonyl-[pyruvate, phosphate dikinase] + ADP = N(tele)-phospho-L-histidyl/O-phospho-L-threonyl-[pyruvate, phosphate dikinase] + AMP + H(+). The enzyme catalyses N(tele)-phospho-L-histidyl/O-phospho-L-threonyl-[pyruvate, phosphate dikinase] + phosphate + H(+) = N(tele)-phospho-L-histidyl/L-threonyl-[pyruvate, phosphate dikinase] + diphosphate. Functionally, bifunctional serine/threonine kinase and phosphorylase involved in the regulation of the pyruvate, phosphate dikinase (PPDK) by catalyzing its phosphorylation/dephosphorylation. The sequence is that of Putative pyruvate, phosphate dikinase regulatory protein from Clostridium botulinum (strain Alaska E43 / Type E3).